The primary structure comprises 119 residues: MARVKRGTMVRKRHKKLLKQAKGYRGARSRHYKVAHEAVMHALADAYRDRRRRKRDFRRLWIMRINAAARLNGTTYSRLVNALKQANIQIDRKMLADLAVRDPQAFSRIVQQAQAAVTA.

It belongs to the bacterial ribosomal protein bL20 family.

In terms of biological role, binds directly to 23S ribosomal RNA and is necessary for the in vitro assembly process of the 50S ribosomal subunit. It is not involved in the protein synthesizing functions of that subunit. This chain is Large ribosomal subunit protein bL20, found in Chloroflexus aggregans (strain MD-66 / DSM 9485).